Consider the following 174-residue polypeptide: uncharacterized protein (174 aa).

A helical membrane pass occupies residues 126-146 (AIDEFIITVIPVVLGSGIPLF).

This sequence to B.subtilis YyaP.

Its subcellular location is the membrane. This is an uncharacterized protein from Bacillus subtilis (strain 168).